The following is a 354-amino-acid chain: uncharacterized protein (354 aa).

The signal sequence occupies residues 1-21 (MFQKKTYAVFLILLLMMFTAA). Cys-22 carries the N-palmitoyl cysteine lipid modification. Cys-22 carries S-diacylglycerol cysteine lipidation.

Its subcellular location is the cell membrane. The protein resides in the membrane raft. This is an uncharacterized protein from Bacillus subtilis (strain 168).